The primary structure comprises 94 residues: Co-chaperonin GroES (94 aa).

This sequence belongs to the GroES chaperonin family. As to quaternary structure, heptamer of 7 subunits arranged in a ring. Interacts with the chaperonin GroEL.

It is found in the cytoplasm. Functionally, together with the chaperonin GroEL, plays an essential role in assisting protein folding. The GroEL-GroES system forms a nano-cage that allows encapsulation of the non-native substrate proteins and provides a physical environment optimized to promote and accelerate protein folding. GroES binds to the apical surface of the GroEL ring, thereby capping the opening of the GroEL channel. The sequence is that of Co-chaperonin GroES from Caldanaerobacter subterraneus subsp. tengcongensis (strain DSM 15242 / JCM 11007 / NBRC 100824 / MB4) (Thermoanaerobacter tengcongensis).